A 309-amino-acid polypeptide reads, in one-letter code: Glutaminase (309 aa).

Substrate-binding residues include serine 64, asparagine 114, glutamate 160, asparagine 167, tyrosine 191, tyrosine 243, and valine 261.

It belongs to the glutaminase family. As to quaternary structure, homotetramer.

The enzyme catalyses L-glutamine + H2O = L-glutamate + NH4(+). The polypeptide is Glutaminase (Methylobacterium radiotolerans (strain ATCC 27329 / DSM 1819 / JCM 2831 / NBRC 15690 / NCIMB 10815 / 0-1)).